We begin with the raw amino-acid sequence, 395 residues long: Acid ceramidase (395 aa).

A signal peptide spans 1-20 (MLGWSRLTFILLSGIVTCLV). C31 and C340 form a disulfide bridge. Residue C143 is the Nucleophile of the active site. N-linked (GlcNAc...) asparagine glycosylation is found at N195, N259, N286, and N342. An intrachain disulfide couples C388 to C392.

The protein belongs to the acid ceramidase family. As to quaternary structure, heterodimer; disulfide-linked. The heterodimer is composed of the disulfide-linked alpha and beta chains produced by autocatalytic cleavage of the precursor. In terms of processing, N-glycosylated. Proteolytically cleaved into two chains alpha and beta that remain associated via a disulfide bond. Cleavage gives rise to a conformation change that activates the enzyme. The same catalytic Cys residue mediates the autoproteolytic cleavage and subsequent hydrolysis of lipid substrates. The beta chain may undergo an additional C-terminal processing.

The protein resides in the lysosome. The protein localises to the secreted. It carries out the reaction an N-acylsphing-4-enine + H2O = sphing-4-enine + a fatty acid. The enzyme catalyses N-dodecanoylsphing-4-enine + H2O = dodecanoate + sphing-4-enine. It catalyses the reaction N-tetradecanoylsphing-4-enine + H2O = tetradecanoate + sphing-4-enine. The catalysed reaction is N-hexadecanoylsphing-4-enine + H2O = sphing-4-enine + hexadecanoate. It carries out the reaction N-octadecanoylsphing-4-enine + H2O = sphing-4-enine + octadecanoate. The enzyme catalyses N-dodecanoyl-(4R)-hydroxysphinganine + H2O = (4R)-hydroxysphinganine + dodecanoate. It catalyses the reaction N-(dodecanoyl)-sphinganine + H2O = dodecanoate + sphinganine. The catalysed reaction is N-(acetyl)-sphing-4-enine + H2O = sphing-4-enine + acetate. It carries out the reaction N-(hexanoyl)sphing-4-enine + H2O = hexanoate + sphing-4-enine. The enzyme catalyses N-octanoylsphing-4-enine + H2O = octanoate + sphing-4-enine. It catalyses the reaction N-(9Z-octadecenoyl)-sphing-4-enine + H2O = sphing-4-enine + (9Z)-octadecenoate. The catalysed reaction is N-dodecanoylethanolamine + H2O = dodecanoate + ethanolamine. Its pathway is lipid metabolism; sphingolipid metabolism. Lysosomal ceramidase that hydrolyzes sphingolipid ceramides into sphingosine and free fatty acids at acidic pH. Ceramides, sphingosine, and its phosphorylated form sphingosine-1-phosphate are bioactive lipids that mediate cellular signaling pathways regulating several biological processes including cell proliferation, apoptosis and differentiation. Has a higher catalytic efficiency towards C12-ceramides versus other ceramides. Also catalyzes the reverse reaction allowing the synthesis of ceramides from fatty acids and sphingosine. For the reverse synthetic reaction, the natural sphingosine D-erythro isomer is more efficiently utilized as a substrate compared to D-erythro-dihydrosphingosine and D-erythro-phytosphingosine, while the fatty acids with chain lengths of 12 or 14 carbons are the most efficiently used. Also has an N-acylethanolamine hydrolase activity. By regulating the levels of ceramides, sphingosine and sphingosine-1-phosphate in the epidermis, mediates the calcium-induced differentiation of epidermal keratinocytes. Also indirectly regulates tumor necrosis factor/TNF-induced apoptosis. By regulating the intracellular balance between ceramides and sphingosine, in adrenocortical cells, probably also acts as a regulator of steroidogenesis. The protein is Acid ceramidase of Bos taurus (Bovine).